A 255-amino-acid polypeptide reads, in one-letter code: Accessory gland-specific peptide 26Aa (255 aa).

Positions methionine 1–alanine 18 are cleaved as a signal peptide. A disordered region spans residues proline 86–glutamine 110. Positions isoleucine 87–glutamine 110 are enriched in polar residues. N-linked (GlcNAc...) asparagine glycans are attached at residues asparagine 88, asparagine 95, and asparagine 136. 2 disordered regions span residues asparagine 177–isoleucine 196 and asparagine 235–threonine 255. The segment covering lysine 183 to proline 192 has biased composition (basic residues). The segment covering lysine 245–threonine 255 has biased composition (polar residues).

It undergoes several cleavages as it is secreted and it is further processed in the recipient female. As to expression, main cells of the accessory glands of males.

It localises to the secreted. The protein resides in the extracellular space. In terms of biological role, this protein is transferred from male to female's hemolymph during mating, affecting egglaying and behavior after mating. This chain is Accessory gland-specific peptide 26Aa (Acp26Aa), found in Drosophila sechellia (Fruit fly).